Consider the following 85-residue polypeptide: uncharacterized protein (85 aa).

A helical membrane pass occupies residues 39–59 (FILFEISMYIIFIVTFCYKII).

It is found in the host membrane. This is an uncharacterized protein from Gallid herpesvirus 2 (strain Chicken/Md5/ATCC VR-987) (GaHV-2).